The following is a 145-amino-acid chain: UPF0201 protein Saci_1285 (145 aa).

It belongs to the UPF0201 family.

The sequence is that of UPF0201 protein Saci_1285 from Sulfolobus acidocaldarius (strain ATCC 33909 / DSM 639 / JCM 8929 / NBRC 15157 / NCIMB 11770).